Reading from the N-terminus, the 145-residue chain is Deoxyuridine 5'-triphosphate nucleotidohydrolase (145 aa).

Residues arginine 63–glycine 65, asparagine 76, threonine 80–aspartate 82, and lysine 90 each bind substrate.

This sequence belongs to the dUTPase family. Mg(2+) serves as cofactor.

The catalysed reaction is dUTP + H2O = dUMP + diphosphate + H(+). It participates in pyrimidine metabolism; dUMP biosynthesis; dUMP from dCTP (dUTP route): step 2/2. This enzyme is involved in nucleotide metabolism: it produces dUMP, the immediate precursor of thymidine nucleotides and it decreases the intracellular concentration of dUTP so that uracil cannot be incorporated into DNA. The chain is Deoxyuridine 5'-triphosphate nucleotidohydrolase from Clostridium acetobutylicum (strain ATCC 824 / DSM 792 / JCM 1419 / IAM 19013 / LMG 5710 / NBRC 13948 / NRRL B-527 / VKM B-1787 / 2291 / W).